Here is a 513-residue protein sequence, read N- to C-terminus: ATP synthase subunit alpha (513 aa).

An ATP-binding site is contributed by 169-176 (GDRQTGKT).

Belongs to the ATPase alpha/beta chains family. In terms of assembly, F-type ATPases have 2 components, CF(1) - the catalytic core - and CF(0) - the membrane proton channel. CF(1) has five subunits: alpha(3), beta(3), gamma(1), delta(1), epsilon(1). CF(0) has three main subunits: a(1), b(2) and c(9-12). The alpha and beta chains form an alternating ring which encloses part of the gamma chain. CF(1) is attached to CF(0) by a central stalk formed by the gamma and epsilon chains, while a peripheral stalk is formed by the delta and b chains.

It is found in the cell inner membrane. The catalysed reaction is ATP + H2O + 4 H(+)(in) = ADP + phosphate + 5 H(+)(out). Functionally, produces ATP from ADP in the presence of a proton gradient across the membrane. The alpha chain is a regulatory subunit. This is ATP synthase subunit alpha from Ralstonia nicotianae (strain ATCC BAA-1114 / GMI1000) (Ralstonia solanacearum).